We begin with the raw amino-acid sequence, 248 residues long: MTNLIKYLKELQNWLFDYVKKSKAKGVIFGLSGGIDSAVVAAIAKETFGFENHLALIMHINNSKLDFQATSELVKKMQFNSINIELEESFNLLVKTLGIDPKKDFLTAGNIKARLRMITLYAYAQKHNFLVLGTGNFVEYTLGYFTKWGDGACDIAPLAWLLKEDVYKLAKHFNIPEIVITRAPTASLFEGQTDETEMGITYKELDQYLKGDLILSSEKQKIVLDLKAKAEHKHNSPLKFKHLYNFQN.

ATP is bound at residue 30-37 (GLSGGIDS). Aspartate 36 lines the Mg(2+) pocket. Position 114 (arginine 114) interacts with deamido-NAD(+). Threonine 134 provides a ligand contact to ATP. Residue glutamate 139 participates in Mg(2+) binding. 2 residues coordinate deamido-NAD(+): lysine 147 and aspartate 154. Lysine 163 and threonine 185 together coordinate ATP. A deamido-NAD(+)-binding site is contributed by 232-233 (HK).

The protein belongs to the NAD synthetase family. In terms of assembly, homodimer.

It carries out the reaction deamido-NAD(+) + NH4(+) + ATP = AMP + diphosphate + NAD(+) + H(+). It functions in the pathway cofactor biosynthesis; NAD(+) biosynthesis; NAD(+) from deamido-NAD(+) (ammonia route): step 1/1. In terms of biological role, catalyzes the ATP-dependent amidation of deamido-NAD to form NAD. Uses ammonia as a nitrogen source. The protein is NH(3)-dependent NAD(+) synthetase of Mycoplasma genitalium (strain ATCC 33530 / DSM 19775 / NCTC 10195 / G37) (Mycoplasmoides genitalium).